We begin with the raw amino-acid sequence, 396 residues long: MPVDFHYGVRVDVTLLSKIRRVNEHIKSATKTGVVQVHGSACTPTLSVLSSVGTAGVLGLRIKNALTPLVGHTEGSGDVSFSFRNTSVGSGFTHTRELFGANVLDAGIAFYRKGEACDTGAQPQFVRTTISYGDNLTSTVHKSVVDQKGILPFHDRMEAGGRTTRLLLCGKTGAFLLKWLRQQKTKEDQTVTVSVSETLSIVTFSLGGVSKIIDFKPETKPVSGWDGLKGKKSVDVGVVHTDALSRVSLESLIAALRLCKVPGWFTPGLIWHSNEILEVEGVPTGCQSGDVKLSVLLLEVNRSVSAEGGESSQKVPDSIPDSRRQPELESPDSPPLTPVGPFGPLEDASEDAASVTSCPPAAPTKDSTKRPHKRRSDSSQSRDRGKVPKTTFNPLI.

The tract at residues 306 to 396 is disordered; the sequence is AEGGESSQKV…VPKTTFNPLI (91 aa). The segment covering 376 to 386 has biased composition (basic and acidic residues); that stretch reads SDSSQSRDRGK.

The protein belongs to the herpesviridae DNA polymerase accessory subunit family. In terms of assembly, homooligomerizes and adopts an oligomeric ring-shaped structure composed of 6 subunits. Forms a complex with the DNA-binding protein, the DNA polymerase subunit, and the alkaline exonuclease.

The protein resides in the virion tegument. It localises to the host nucleus. Functionally, plays an essential role in the viral lytic DNA replication by acting as the polymerase accessory subunit. Stimulates the viral DNA polymerase activity and appears to function with it as a holoenzyme. Increases the processivity of the viral polymerase, probably by acting as a sliding clamp that prevents dissociation of the polymerase from the active template. This Homo sapiens (Human) protein is DNA polymerase processivity factor (ORF59).